The sequence spans 429 residues: Dual-specificity RNA methyltransferase RlmN (429 aa).

Positions 1 to 23 (MRAMQTHTEIAPMPIPGHVDPVP) are disordered. Glutamate 128 acts as the Proton acceptor in catalysis. Positions 134–397 (DADRGTLCVS…APVRTPRGRD (264 aa)) constitute a Radical SAM core domain. A disulfide bond links cysteine 141 and cysteine 402. 3 residues coordinate [4Fe-4S] cluster: cysteine 148, cysteine 152, and cysteine 155. S-adenosyl-L-methionine is bound by residues 226-227 (GE), serine 258, 280-282 (SLH), and asparagine 359. Cysteine 402 serves as the catalytic S-methylcysteine intermediate.

The protein belongs to the radical SAM superfamily. RlmN family. Requires [4Fe-4S] cluster as cofactor.

It localises to the cytoplasm. It catalyses the reaction adenosine(2503) in 23S rRNA + 2 reduced [2Fe-2S]-[ferredoxin] + 2 S-adenosyl-L-methionine = 2-methyladenosine(2503) in 23S rRNA + 5'-deoxyadenosine + L-methionine + 2 oxidized [2Fe-2S]-[ferredoxin] + S-adenosyl-L-homocysteine. The enzyme catalyses adenosine(37) in tRNA + 2 reduced [2Fe-2S]-[ferredoxin] + 2 S-adenosyl-L-methionine = 2-methyladenosine(37) in tRNA + 5'-deoxyadenosine + L-methionine + 2 oxidized [2Fe-2S]-[ferredoxin] + S-adenosyl-L-homocysteine. Specifically methylates position 2 of adenine 2503 in 23S rRNA and position 2 of adenine 37 in tRNAs. m2A2503 modification seems to play a crucial role in the proofreading step occurring at the peptidyl transferase center and thus would serve to optimize ribosomal fidelity. This is Dual-specificity RNA methyltransferase RlmN from Novosphingobium aromaticivorans (strain ATCC 700278 / DSM 12444 / CCUG 56034 / CIP 105152 / NBRC 16084 / F199).